The following is a 402-amino-acid chain: Multidrug resistance protein MdtH (402 aa).

Residues 1–12 (MSRVSQARNLGK) lie on the Cytoplasmic side of the membrane. The chain crosses the membrane as a helical span at residues 13–33 (YFLLIDNMLVVLGFFVVFPLI). Residues 34-98 (SIRFVDQMGW…GFATMGIAHE (65 aa)) lie on the Periplasmic side of the membrane. The chain crosses the membrane as a helical span at residues 99 to 116 (PWLLWFSCFLSGLGGTLF). The Cytoplasmic segment spans residues 117 to 138 (DPPRSALVVKLIRPEQRGRFFS). The helical transmembrane segment at 139 to 159 (LLMMQDSAGAVIGALLGSWLL) threads the bilayer. Over 160 to 164 (QYDFR) the chain is Periplasmic. A helical transmembrane segment spans residues 165 to 185 (LVCATGAILFILCALFNAWLL). Residues 186–213 (PAWKLSTVRTPVREGMRRVMSDKRFVTY) lie on the Cytoplasmic side of the membrane. The helical transmembrane segment at 214 to 234 (VLTLAGYYMLAVQVMLMLPIM) threads the bilayer. Residues 235-243 (VNDIAGSPA) lie on the Periplasmic side of the membrane. Residues 244–264 (AVKWMYAIEACLSLTLLYPIA) form a helical membrane-spanning segment. Over 265 to 276 (RWSEKRFRLEHR) the chain is Cytoplasmic. The helical transmembrane segment at 277 to 297 (LMAGLLVMSLSMIPIGMVGNL) threads the bilayer. The Periplasmic portion of the chain corresponds to 298–299 (QQ). The chain crosses the membrane as a helical span at residues 300–320 (LFTLICAFYIGSVIAEPARET). Topologically, residues 321–339 (LSASLADARARGSYMGFSR) are cytoplasmic. A helical membrane pass occupies residues 340–360 (LGLAIGGAIGYIGGGWLFDMG). The Periplasmic portion of the chain corresponds to 361-367 (KALAQPE). The chain crosses the membrane as a helical span at residues 368–388 (LPWMMLGIIGFITFLALGWQF). The Cytoplasmic segment spans residues 389–402 (SHKRTPRRMLEPGA).

Belongs to the major facilitator superfamily. DHA1 family. MdtH (TC 2.A.1.2.21) subfamily.

The protein localises to the cell inner membrane. This Salmonella schwarzengrund (strain CVM19633) protein is Multidrug resistance protein MdtH.